A 501-amino-acid chain; its full sequence is Lysine--tRNA ligase (501 aa).

Mg(2+) is bound by residues Asp411 and Glu418.

Belongs to the class-II aminoacyl-tRNA synthetase family. As to quaternary structure, homodimer. It depends on Mg(2+) as a cofactor.

It is found in the cytoplasm. The enzyme catalyses tRNA(Lys) + L-lysine + ATP = L-lysyl-tRNA(Lys) + AMP + diphosphate. In Mycolicibacterium gilvum (strain PYR-GCK) (Mycobacterium gilvum (strain PYR-GCK)), this protein is Lysine--tRNA ligase.